The sequence spans 482 residues: MGKRQDWSVTACIFLFLSLASQIHCRSHIPFPSPKRGVSSSGDTSHFNVIQRESVPSPKDKDLIQQLPGQPSDVTFKQYGGYVAVNKPAGRFLYYYFVETIKPGNTTPLVIWFNGGPGCSSLGGAFKELGPFRVHSDGKTLFRNPYSWNNEANVLFLETPVGTGFSYSNSPINGKQGDKATAEDNYMFLVNWLERFPEYKGRDIYIAGQSYAGHYVPQLAQIILHRNNQTLINLRGILIGNPSLNREIQDDFGYKFMFSHGLISQQQMDNYNKFCTDSDLYDWDKCHLASQKIEAQKTHLDIYNIYAPLCLNSTLSSEPKKCTTIMKADPCSGNYLKAYLNIKEVQEAIHANTTKIPYEWTSCNTKLLWEWNEKDRYVSLTPILQELMGKGVRVMLYNGDVDLVIPFTSTLAVVKTMNLTVVKEWRPWFTGGHVGGFTEDYKGNLTFVTVKGAGHSVPTDQPIHALNIFTSFIRNTPLPQTA.

The signal sequence occupies residues 1–25 (MGKRQDWSVTACIFLFLSLASQIHC). 3 disulfide bridges follow: cysteine 119-cysteine 363, cysteine 275-cysteine 286, and cysteine 310-cysteine 331. Serine 210 is a catalytic residue. Asparagine 228 carries an N-linked (GlcNAc...) asparagine glycan. N-linked (GlcNAc...) asparagine glycosylation is found at asparagine 312 and asparagine 352. The active site involves aspartate 402. N-linked (GlcNAc...) asparagine glycosylation is found at asparagine 418 and asparagine 444. Histidine 455 is an active-site residue.

Belongs to the peptidase S10 family. As to expression, expressed in seedlings, flowers and siliques.

It is found in the secreted. Functionally, probable carboxypeptidase. This chain is Serine carboxypeptidase-like 36 (SCPL36), found in Arabidopsis thaliana (Mouse-ear cress).